A 331-amino-acid polypeptide reads, in one-letter code: POU domain, class 4, transcription factor 3 (331 aa).

A compositionally biased stretch (low complexity) spans 81–97 (TSSSSTVPISHPSSNLP). Residues 81 to 108 (TSSSSTVPISHPSSNLPSHHHHHLSHQT) are disordered. The POU-specific domain maps to 172–249 (DVESDPRELE…VLQAWLEEAE (78 aa)). Positions 267–326 (RKRKRTSIAAPEKRSLEAYFAIQPRPSSEKIAAIAEKLDLKKNVVRVWFCNQRQKQKRMK) form a DNA-binding region, homeobox.

The protein belongs to the POU transcription factor family. Class-4 subfamily. In terms of assembly, interaction with ISL1. Expressed in the nervous system. Expressed in the otic vesicle during embryogenesis. Expressed in the adult retina in a subset of retinal ganglion cells (RGCs), and at a lower level in the adult tectum. Not expressed in the adult olfactory bulb.

The protein resides in the nucleus. It localises to the cytoplasm. In terms of biological role, acts as a transcriptional activator. Acts by binding to sequences related to the consensus octamer motif 5'-ATGCAAAT-3' in the regulatory regions of its target genes. May play a role in specifying terminally differentiated neuronal phenotypes. The protein is POU domain, class 4, transcription factor 3 (pou4f3) of Danio rerio (Zebrafish).